Reading from the N-terminus, the 220-residue chain is Histone deacetylase complex subunit SAP30 (220 aa).

Residues 1–129 (MNGFTPEEMS…QSVRNRRKRK (129 aa)) form an interaction with NCOR1 region. Threonine 5 bears the Phosphothreonine mark. The Atypical zinc finger occupies 67–115 (CCLREDGERCGRAAGNASFSKRIQKSISQKKVKIELDKSARHLYICDYH). A Glycyl lysine isopeptide (Lys-Gly) (interchain with G-Cter in SUMO2) cross-link involves residue lysine 87. Residues 123–143 (RNRRKRKGSDDDGGDSPVQDI) form a disordered region. Positions 130-220 (GSDDDGGDSP…SDLKADSGVH (91 aa)) are interaction with SIN3A. Phosphoserine occurs at positions 131 and 138. Position 145 is a phosphothreonine (threonine 145). Residues lysine 194 and lysine 214 each participate in a glycyl lysine isopeptide (Lys-Gly) (interchain with G-Cter in SUMO2) cross-link.

This sequence belongs to the SAP30 family. Component of the histone deacetylase complex that includes at least SIN3A, HDAC1 and HDAC2. Found in a complex composed of at least SINHCAF, SIN3A, HDAC1, SAP30, RBBP4, OGT and TET1. Interacts with HDAC1. Interacts with SIN3A, SIN3B, HDAC2, RBBP4 and NCOR1. Interacts directly with SAMSN1. Interacts with HCFC1. Interacts with SAP30BP.

The protein localises to the nucleus. Involved in the functional recruitment of the Sin3-histone deacetylase complex (HDAC) to a specific subset of N-CoR corepressor complexes. Capable of transcription repression by N-CoR. Active in deacetylating core histone octamers (when in a complex) but inactive in deacetylating nucleosomal histones. The sequence is that of Histone deacetylase complex subunit SAP30 from Mus musculus (Mouse).